The following is a 458-amino-acid chain: Phosphoglucosamine mutase (458 aa).

Ser-108 acts as the Phosphoserine intermediate in catalysis. The Mg(2+) site is built by Ser-108, Asp-247, Asp-249, and Asp-251. Ser-108 bears the Phosphoserine mark.

Belongs to the phosphohexose mutase family. The cofactor is Mg(2+). In terms of processing, activated by phosphorylation.

The catalysed reaction is alpha-D-glucosamine 1-phosphate = D-glucosamine 6-phosphate. Catalyzes the conversion of glucosamine-6-phosphate to glucosamine-1-phosphate. This chain is Phosphoglucosamine mutase, found in Nitrosomonas europaea (strain ATCC 19718 / CIP 103999 / KCTC 2705 / NBRC 14298).